The chain runs to 203 residues: Glycerol-3-phosphate acyltransferase (203 aa).

The next 4 membrane-spanning stretches (helical) occupy residues 7–27 (TLLM…VLVC), 82–102 (AVSL…PVFF), 118–138 (APIG…LLLI), and 141–161 (YSSL…WWLD).

It belongs to the PlsY family. As to quaternary structure, probably interacts with PlsX.

It is found in the cell inner membrane. The catalysed reaction is an acyl phosphate + sn-glycerol 3-phosphate = a 1-acyl-sn-glycero-3-phosphate + phosphate. It functions in the pathway lipid metabolism; phospholipid metabolism. Functionally, catalyzes the transfer of an acyl group from acyl-phosphate (acyl-PO(4)) to glycerol-3-phosphate (G3P) to form lysophosphatidic acid (LPA). This enzyme utilizes acyl-phosphate as fatty acyl donor, but not acyl-CoA or acyl-ACP. This is Glycerol-3-phosphate acyltransferase from Shewanella baltica (strain OS223).